Consider the following 469-residue polypeptide: Mitochondrial distribution and morphology protein 10 (469 aa).

The protein belongs to the MDM10 family. As to quaternary structure, component of the ER-mitochondria encounter structure (ERMES) or MDM complex, composed of MMM1, MDM10, MDM12 and MDM34. Associates with the mitochondrial outer membrane sorting assembly machinery SAM(core) complex.

It is found in the mitochondrion outer membrane. In terms of biological role, component of the ERMES/MDM complex, which serves as a molecular tether to connect the endoplasmic reticulum and mitochondria. Components of this complex are involved in the control of mitochondrial shape and protein biogenesis and may function in phospholipid exchange. MDM10 is involved in the late assembly steps of the general translocase of the mitochondrial outer membrane (TOM complex). Functions in the TOM40-specific route of the assembly of outer membrane beta-barrel proteins, including the association of TOM40 with the receptor TOM22 and small TOM proteins. Can associate with the SAM(core) complex as well as the MDM12-MMM1 complex, both involved in late steps of the major beta-barrel assembly pathway, that is responsible for biogenesis of all outer membrane beta-barrel proteins. May act as a switch that shuttles between both complexes and channels precursor proteins into the TOM40-specific pathway. Plays a role in mitochondrial morphology and in the inheritance of mitochondria. This chain is Mitochondrial distribution and morphology protein 10, found in Scheffersomyces stipitis (strain ATCC 58785 / CBS 6054 / NBRC 10063 / NRRL Y-11545) (Yeast).